A 314-amino-acid chain; its full sequence is Acetyl-coenzyme A carboxylase carboxyl transferase subunit alpha (314 aa).

The CoA carboxyltransferase C-terminal domain occupies 32–289; that stretch reads EIDMLEASLE…KSAFVEQLDS (258 aa).

Belongs to the AccA family. In terms of assembly, acetyl-CoA carboxylase is a heterohexamer composed of biotin carboxyl carrier protein (AccB), biotin carboxylase (AccC) and two subunits each of ACCase subunit alpha (AccA) and ACCase subunit beta (AccD).

The protein resides in the cytoplasm. The catalysed reaction is N(6)-carboxybiotinyl-L-lysyl-[protein] + acetyl-CoA = N(6)-biotinyl-L-lysyl-[protein] + malonyl-CoA. It participates in lipid metabolism; malonyl-CoA biosynthesis; malonyl-CoA from acetyl-CoA: step 1/1. Functionally, component of the acetyl coenzyme A carboxylase (ACC) complex. First, biotin carboxylase catalyzes the carboxylation of biotin on its carrier protein (BCCP) and then the CO(2) group is transferred by the carboxyltransferase to acetyl-CoA to form malonyl-CoA. The protein is Acetyl-coenzyme A carboxylase carboxyl transferase subunit alpha of Staphylococcus aureus (strain bovine RF122 / ET3-1).